The primary structure comprises 229 residues: Potassium/proton antiporter CemA (229 aa).

A run of 4 helical transmembrane segments spans residues 7–27 (FIPF…YLSF), 106–126 (MILH…YSIL), 154–174 (ILLV…ELLI), and 189–209 (IISS…KYWI).

The protein belongs to the CemA family.

The protein resides in the plastid. It is found in the chloroplast inner membrane. It catalyses the reaction K(+)(in) + H(+)(out) = K(+)(out) + H(+)(in). Contributes to K(+)/H(+) antiport activity by supporting proton efflux to control proton extrusion and homeostasis in chloroplasts in a light-dependent manner to modulate photosynthesis. Prevents excessive induction of non-photochemical quenching (NPQ) under continuous-light conditions. Indirectly promotes efficient inorganic carbon uptake into chloroplasts. The sequence is that of Potassium/proton antiporter CemA from Spinacia oleracea (Spinach).